Consider the following 986-residue polypeptide: Probable serine/threonine-protein kinase DDB_G0272092 (986 aa).

Positions 1 to 107 constitute a C2 domain; sequence MARKIGSVRI…EYIVDTTKWY (107 aa). 6 residues coordinate Ca(2+): aspartate 22, aspartate 28, aspartate 76, aspartate 78, serine 81, and aspartate 84. 6 ANK repeats span residues 137–167, 171–201, 205–238, 242–274, 278–307, and 312–344; these read PEKSPFIKAIKDNDTQAIELMMNKAKLDYTI, EGTPAIHIAAASNNIPLITMLLKGSDARVSI, HGNTPLHLFVQKNVSLNCEDIINKLIERGCGIND, LGETALHKACLATVVQKTTIVEQLLQKGAIINH, TRDTPLHYAIKVGKVEFVRFFLQNGANVMI, and PSRTPLELAKELGNPQIISKVEKVIEISDWLNE. The 64-residue stretch at 333-396 folds into the SAM domain; sequence EKVIEISDWL…LRAVRKIKDP (64 aa). Residues 412–438 show a composition bias toward low complexity; that stretch reads HVENDNNNNNNNNNNNNNSQEQCNINN. Disordered regions lie at residues 412-520 and 532-574; these read HVEN…SNTT and TTLT…PEGP. The span at 439 to 448 shows a compositional bias: polar residues; it reads DSLGSGNRNS. Over residues 454–464 the composition is skewed to low complexity; that stretch reads QNQNNTLNNNN. Over residues 465–476 the composition is skewed to polar residues; sequence VESKSTGNLNSL. Composition is skewed to low complexity over residues 493–520 and 546–571; these read NILSPNPIPASSSAPAAPSPVAIGSNTT and TESTTPPQQQQQTTTITPTKTTTVTP. Residues 601 to 870 enclose the Protein kinase domain; that stretch reads LTYNVLLGTG…ELLKIRDEYN (270 aa). ATP-binding positions include 607 to 615 and lysine 628; that span reads LGTGASGKV. Catalysis depends on aspartate 722, which acts as the Proton acceptor. Composition is skewed to low complexity over residues 901–913 and 928–947; these read DSNNINNNNNNNN and SNSNLLNNNNNNNNNDSDNN. A disordered region spans residues 901-986; that stretch reads DSNNINNNNN…SPMEPKSIKK (86 aa). Composition is skewed to polar residues over residues 948 to 959 and 969 to 978; these read ISEPATTDSITK and LTRTRSSSSP.

This sequence belongs to the protein kinase superfamily. TKL Ser/Thr protein kinase family. It depends on Ca(2+) as a cofactor.

It catalyses the reaction L-seryl-[protein] + ATP = O-phospho-L-seryl-[protein] + ADP + H(+). It carries out the reaction L-threonyl-[protein] + ATP = O-phospho-L-threonyl-[protein] + ADP + H(+). This Dictyostelium discoideum (Social amoeba) protein is Probable serine/threonine-protein kinase DDB_G0272092.